We begin with the raw amino-acid sequence, 140 residues long: Nucleoside diphosphate kinase (140 aa).

Positions 11, 59, 87, 93, 104, and 114 each coordinate ATP. Histidine 117 (pros-phosphohistidine intermediate) is an active-site residue.

It belongs to the NDK family. As to quaternary structure, homotetramer. The cofactor is Mg(2+).

It localises to the cytoplasm. It catalyses the reaction a 2'-deoxyribonucleoside 5'-diphosphate + ATP = a 2'-deoxyribonucleoside 5'-triphosphate + ADP. The enzyme catalyses a ribonucleoside 5'-diphosphate + ATP = a ribonucleoside 5'-triphosphate + ADP. In terms of biological role, major role in the synthesis of nucleoside triphosphates other than ATP. The ATP gamma phosphate is transferred to the NDP beta phosphate via a ping-pong mechanism, using a phosphorylated active-site intermediate. The chain is Nucleoside diphosphate kinase from Sinorhizobium fredii (strain NBRC 101917 / NGR234).